Consider the following 208-residue polypeptide: Phomoidride biosynthesis cluster protein B (208 aa).

It belongs to the tstB family.

Functionally, phosphatidylethanolamine-binding protein; part of the gene cluster that mediates the biosynthesis of the antihypercholesterolemic agents phomoidrides which are dimeric anhydrides. Within the pathway, phiB is not essential for dimerization and its function has still to be determined. The pathway begins with the highly reducing polyketide synthase phiA that catalyzes the formation of a C12-fatty acyl-ACP, starting from one acetate and 5 malonate units. The hydrolase phiM is involved in the release of the C12-fatty acyl chain from phiA. The alkylcitrate synthase (ACS) phiJ and the alkylcitrate dehydratase (ACDH) phiI then give rise to decarboxylated monomeric anhydrides by coupling the C12-fatty acyl chain with oxalacetic acid. The cyclase phiC is responsible for the dimerization of the monomeric anhydrides which leads to the production of prephomoidride that contains the characteristic bicyclo[4.3.1]deca-1,6-diene system of phomoidrides. Iterative oxidation catalyzed by the alpha-ketoglutarate-dependent dioxygenase phiK produced then phomoidride A. Finally, the methyltransferase phiE converts phomoidride A to phomoidride B via an acetalization reaction. The phosphatidylethanolamine-binding protein phiB and phiN are not essential for dimerization and their functions have still to be determined. This Fungal sp. (strain ATCC 74256) protein is Phomoidride biosynthesis cluster protein B.